The chain runs to 302 residues: Putative gluconeogenesis factor (302 aa).

This sequence belongs to the gluconeogenesis factor family.

It localises to the cytoplasm. Its function is as follows. Required for morphogenesis under gluconeogenic growth conditions. The polypeptide is Putative gluconeogenesis factor (ybhK) (Escherichia coli O157:H7).